We begin with the raw amino-acid sequence, 186 residues long: Elongation factor P (186 aa).

This sequence belongs to the elongation factor P family.

Its subcellular location is the cytoplasm. It participates in protein biosynthesis; polypeptide chain elongation. Its function is as follows. Involved in peptide bond synthesis. Stimulates efficient translation and peptide-bond synthesis on native or reconstituted 70S ribosomes in vitro. Probably functions indirectly by altering the affinity of the ribosome for aminoacyl-tRNA, thus increasing their reactivity as acceptors for peptidyl transferase. The sequence is that of Elongation factor P from Mycoplasmopsis synoviae (strain 53) (Mycoplasma synoviae).